The chain runs to 320 residues: ATP-dependent 6-phosphofructokinase (320 aa).

Residue Gly12 coordinates ATP. ADP is bound by residues 22-26 (RGVVR) and 55-60 (RYSVSD). Residues 73-74 (RF) and 103-106 (GDGS) each bind ATP. Position 104 (Asp104) interacts with Mg(2+). 126–128 (TID) provides a ligand contact to substrate. Residue Asp128 is the Proton acceptor of the active site. Residue Arg155 participates in ADP binding. Substrate is bound by residues Arg163 and 170–172 (MGR). Residues 186–188 (GCE), Lys212, and 214–216 (KKH) each bind ADP. Residues Glu223, Arg244, and 250–253 (HIQR) contribute to the substrate site.

It belongs to the phosphofructokinase type A (PFKA) family. ATP-dependent PFK group I subfamily. Prokaryotic clade 'B1' sub-subfamily. Homotetramer. It depends on Mg(2+) as a cofactor.

Its subcellular location is the cytoplasm. The enzyme catalyses beta-D-fructose 6-phosphate + ATP = beta-D-fructose 1,6-bisphosphate + ADP + H(+). The protein operates within carbohydrate degradation; glycolysis; D-glyceraldehyde 3-phosphate and glycerone phosphate from D-glucose: step 3/4. Allosterically activated by ADP and other diphosphonucleosides, and allosterically inhibited by phosphoenolpyruvate. Functionally, catalyzes the phosphorylation of D-fructose 6-phosphate to fructose 1,6-bisphosphate by ATP, the first committing step of glycolysis. The sequence is that of ATP-dependent 6-phosphofructokinase from Buchnera aphidicola subsp. Schizaphis graminum (strain Sg).